We begin with the raw amino-acid sequence, 489 residues long: MEMEMSVLAMSSTLILALAMALIFLFKAKSSSAIKWPPGPKTLPIIGNLHQLGGDELHIVLAKLARVHGAIMTIWMAKKPVIVVSDVNSVWEVLVSKSSDYAARDAAEISKIVSASSHSINTSDSGPYWQTLRRGLTHGPLGPLNISAQIPIQQRDMQRVIREMQQDAAANGGIIKPLDHLKRSSTRLVSRLIFGDTFDNDPYNDSMHEVVQDLNRFGGIALLEQAFSFAKHLPSYKRGVKEFHIHKRKIDDLVRPVVASANPPSNSYLGFLQSQNYSEEIIIACIFELYLLAMDSSASTATWALAFMIRDQQVQEKLYQDIKRVIGDGVDLVKAEDLSKMHYLQAVVKETMRMKPIAPLAIPHKTAIDTTVMGTKVPKGTCVMVNLYALHHDESVWAKPYTFMPERFLQGEDGKSVTEQAFLPFGAGMRICGGMEVGKLQFSLALANLVNAFKWTSAAEGKLPDMSDELQFITVMKTPLEARIIPRNP.

A helical membrane pass occupies residues 6-26 (SVLAMSSTLILALAMALIFLF). Residue Cys432 participates in heme binding.

The protein belongs to the cytochrome P450 family. It depends on heme as a cofactor. In terms of tissue distribution, expressed in leaves, rhizomes and stems.

The protein resides in the membrane. It carries out the reaction (-)-matairesinol + reduced [NADPH--hemoprotein reductase] + O2 = (-)-pluviatolide + oxidized [NADPH--hemoprotein reductase] + 2 H2O + H(+). It functions in the pathway aromatic compound metabolism; phenylpropanoid biosynthesis. Cytochrome P450 involved in the biosynthesis of etoposide, a chemotherapeutic compound of the topoisomerase inhibitor family. Catalyzes the conversion of matairesinol to pluviatolide. The polypeptide is Pluviatolide synthase (Sinopodophyllum hexandrum (Himalayan may apple)).